The primary structure comprises 506 residues: GPI mannosyltransferase 3 (506 aa).

Asn-115 is a glycosylation site (N-linked (GlcNAc...) asparagine). A run of 6 helical transmembrane segments spans residues 180-200 (AFAC…LLFW), 229-249 (YGRL…NIIA), 257-277 (FVFP…SSLY), 285-305 (YLSQ…LLTM), 330-350 (FVYP…SSFS), and 358-378 (FFFL…RFHQ). N-linked (GlcNAc...) asparagine glycosylation is present at Asn-395.

It belongs to the glycosyltransferase 22 family. PIGB subfamily.

It is found in the endoplasmic reticulum membrane. It functions in the pathway glycolipid biosynthesis; glycosylphosphatidylinositol-anchor biosynthesis. In terms of biological role, mannosyltransferase involved in glycosylphosphatidylinositol-anchor biosynthesis. Transfers the third mannose to Man2-GlcN-acyl-PI during GPI precursor assembly. This is GPI mannosyltransferase 3 (gpi10) from Schizosaccharomyces pombe (strain 972 / ATCC 24843) (Fission yeast).